We begin with the raw amino-acid sequence, 560 residues long: Choline/ethanolamine transporter FLVCR1 (560 aa).

A disordered region spans residues 1-22 (MVKLNDEEGAAMAPGHQPTNGY). Residues 1 to 99 (MVKLNDEEGA…TPGTEGSPAP (99 aa)) are Cytoplasmic-facing. S56 bears the Phosphoserine mark. The tract at residues 68–99 (QTPLAPEEETQTRLLPTGPGEETPGTEGSPAP) is disordered. The span at 83 to 95 (PTGPGEETPGTEG) shows a compositional bias: low complexity. The chain crosses the membrane as a helical span at residues 100–124 (QTALSARRFVVLLIFSLYSLVNAFQ). Over 125 to 142 (WIQYSVISNVFEGFYGVS) the chain is Extracellular. Residues 143-170 (SLHIDWLSMVYMLAYVPLIFPATWLLDT) form a helical membrane-spanning segment. Over 171 to 172 (RG) the chain is Cytoplasmic. A helical transmembrane segment spans residues 173-192 (LRLTALLGSGLNCLGAWVKC). The Extracellular segment spans residues 193–199 (ASVQQHL). The chain crosses the membrane as a helical span at residues 200–228 (FWVTMLGQCLCSVAQVFILGLPSRIASVW). An ethanolamine-binding site is contributed by Q214. The Cytoplasmic portion of the chain corresponds to 229–233 (FGPKE). The chain crosses the membrane as a helical span at residues 234–259 (VSTACATAVLGNQLGAAIGFLLPPVL). Over 260-265 (VPNTQN) the chain is Extracellular. A glycan (N-linked (GlcNAc...) asparagine) is linked at N265. A helical transmembrane segment spans residues 266-295 (NTDLLACNISTMFYGTSSVATFLCFLTIIA). The Cytoplasmic segment spans residues 296–331 (FKEKPQYPPSQAQAALQNSPPAKYSYKKSIRNLFRN). The chain crosses the membrane as a helical span at residues 332 to 362 (VPFVLLLITYGIITGAFYSVSTLLNQMILTY). The Extracellular segment spans residues 363 to 366 (YKGE). A helical membrane pass occupies residues 367 to 395 (EVSAGKIGLTLVVAGMVGSILCGFWLDYT). The Cytoplasmic segment spans residues 396–397 (KI). A helical transmembrane segment spans residues 398-420 (YKQTTLIVYILSFLGMVIFTFTL). Residues 421 to 423 (DLG) are Extracellular-facing. The helical transmembrane segment at 424–453 (YGIVVFVTGGVLGFFMTGYLPLGFEFAVEI) threads the bilayer. Residues 454 to 461 (TYPESEGT) are Cytoplasmic-facing. A helical transmembrane segment spans residues 462 to 487 (SSGLLNAAAQIFGILFTLAQGKLTTD). Q471 is a binding site for ethanolamine. Position 471 (Q471) interacts with choline. At 488–489 (YS) the chain is on the extracellular side. A helical membrane pass occupies residues 490-512 (PKAGNIFLCVWLFLGIILTALIK). At 513–560 (SDLRRHNINIGIANGDIKAVPVEDTVEDSPTDKESKTIVMSKQSESAI) the chain is on the cytoplasmic side. The segment at 537–560 (TVEDSPTDKESKTIVMSKQSESAI) is disordered. S541 bears the Phosphoserine mark. A compositionally biased stretch (polar residues) spans 550–560 (IVMSKQSESAI).

This sequence belongs to the major facilitator superfamily. Feline leukemia virus subgroup C receptor (TC 2.A.1.28.1) family.

It localises to the cell membrane. The catalysed reaction is choline(out) = choline(in). The enzyme catalyses ethanolamine(in) = ethanolamine(out). It carries out the reaction heme b(in) = heme b(out). Its function is as follows. Uniporter that mediates the transport of extracellular choline and ethanolamine into cells, thereby playing a key role in phospholipid biosynthesis. Choline and ethanolamine are the precursors of phosphatidylcholine and phosphatidylethanolamine, respectively, the two most abundant phospholipids. Transport is not coupled with proton transport and is exclusively driven by the choline (or ethanolamine) gradient across the plasma membrane. Also acts as a heme b transporter that mediates heme efflux from the cytoplasm to the extracellular compartment. Functionally, (Microbial infection) Confers susceptibility to Feline leukemia virus subgroup C (FeLV-C) infection, which is associated with fatal erythroid aplasia, also known as aplastic anemia. This Felis catus (Cat) protein is Choline/ethanolamine transporter FLVCR1 (FLVCR1).